The primary structure comprises 494 residues: Aspartyl/glutamyl-tRNA(Asn/Gln) amidotransferase subunit B (494 aa).

It belongs to the GatB/GatE family. GatB subfamily. Heterotrimer of A, B and C subunits.

It carries out the reaction L-glutamyl-tRNA(Gln) + L-glutamine + ATP + H2O = L-glutaminyl-tRNA(Gln) + L-glutamate + ADP + phosphate + H(+). The catalysed reaction is L-aspartyl-tRNA(Asn) + L-glutamine + ATP + H2O = L-asparaginyl-tRNA(Asn) + L-glutamate + ADP + phosphate + 2 H(+). Its function is as follows. Allows the formation of correctly charged Asn-tRNA(Asn) or Gln-tRNA(Gln) through the transamidation of misacylated Asp-tRNA(Asn) or Glu-tRNA(Gln) in organisms which lack either or both of asparaginyl-tRNA or glutaminyl-tRNA synthetases. The reaction takes place in the presence of glutamine and ATP through an activated phospho-Asp-tRNA(Asn) or phospho-Glu-tRNA(Gln). This chain is Aspartyl/glutamyl-tRNA(Asn/Gln) amidotransferase subunit B, found in Rhodopseudomonas palustris (strain BisA53).